Here is a 570-residue protein sequence, read N- to C-terminus: Zinc finger protein 76 (570 aa).

Lysine 24 is covalently cross-linked (Glycyl lysine isopeptide (Lys-Gly) (interchain with G-Cter in SUMO2)). A run of 3 repeats spans residues 34–45, 62–73, and 88–99. The segment at 34–99 is 3 X 12 AA approximate repeats; it reads IQLEDGTTAY…LEDGSTAYIH (66 aa). 7 C2H2-type zinc fingers span residues 165–189, 195–219, 225–249, 255–279, 285–309, 315–339, and 345–368; these read FRCG…ERAH, YRCD…VRTH, YKCP…VRTH, FQCP…VRTH, YTCP…VRIH, YVCT…HVVH, and YTCS…RSAH. The segment at 365-401 is disordered; that stretch reads RSAHGELEATEESEQALYEQQQLEAASAAEESPPPKR. The segment covering 379 to 395 has biased composition (low complexity); that stretch reads QALYEQQQLEAASAAEE.

The protein belongs to the krueppel C2H2-type zinc-finger protein family. As to expression, testis.

Its subcellular location is the nucleus. Its function is as follows. May be involved in transcriptional regulation. The protein is Zinc finger protein 76 (ZNF76) of Homo sapiens (Human).